The chain runs to 209 residues: RFTSAFSPVAFSLGLLLVMATAFPTPGPVGGESQADATSNRPPLTSPDKMEEFIKYILGKISALRKEMCDKYNKCEDSKEALAENNLRLPKLAEKDGCFQSGFNQETCLTRITTGLLEFQIHLKYIQANYEGNKEDANSVYISTKLLVQMLMKKVKSQDEVTTPDPTTDTSLQAILKAQDKWLKHTTIHLILRSLEDFLQFSLRAVRIM.

The signal sequence occupies residues 1-26; sequence RFTSAFSPVAFSLGLLLVMATAFPTP. Residues 28–47 are disordered; it reads PVGGESQADATSNRPPLTSP. The cysteines at positions 69 and 75 are disulfide-linked. Serine 78 bears the Phosphoserine mark. Cysteine 98 and cysteine 108 are disulfide-bonded.

This sequence belongs to the IL-6 superfamily. In terms of assembly, component of a hexamer of two molecules each of IL6, IL6R and IL6ST; first binds to IL6R to associate with the signaling subunit IL6ST. Interacts with IL6R (via the N-terminal ectodomain); this interaction may be affected by IL6R-binding with SORL1, hence decreasing IL6 cis signaling. Interacts with SORL1 (via the N-terminal ectodomain); this interaction leads to IL6 internalization and lysosomal degradation. May form a trimeric complex with the soluble SORL1 ectodomain and soluble IL6R receptor; this interaction might stabilize circulating IL6, hence promoting IL6 trans signaling.

The protein localises to the secreted. Its function is as follows. Cytokine with a wide variety of biological functions in immunity, tissue regeneration, and metabolism. Binds to IL6R, then the complex associates to the signaling subunit IL6ST/gp130 to trigger the intracellular IL6-signaling pathway. The interaction with the membrane-bound IL6R and IL6ST stimulates 'classic signaling', whereas the binding of IL6 and soluble IL6R to IL6ST stimulates 'trans-signaling'. Alternatively, 'cluster signaling' occurs when membrane-bound IL6:IL6R complexes on transmitter cells activate IL6ST receptors on neighboring receiver cells. In terms of biological role, IL6 is a potent inducer of the acute phase response. Rapid production of IL6 contributes to host defense during infection and tissue injury, but excessive IL6 synthesis is involved in disease pathology. In the innate immune response, is synthesized by myeloid cells, such as macrophages and dendritic cells, upon recognition of pathogens through toll-like receptors (TLRs) at the site of infection or tissue injury. In the adaptive immune response, is required for the differentiation of B cells into immunoglobulin-secreting cells. Plays a major role in the differentiation of CD4(+) T cell subsets. Essential factor for the development of T follicular helper (Tfh) cells that are required for the induction of germinal-center formation. Required to drive naive CD4(+) T cells to the Th17 lineage. Also required for proliferation of myeloma cells and the survival of plasmablast cells. Functionally, acts as an essential factor in bone homeostasis and on vessels directly or indirectly by induction of VEGF, resulting in increased angiogenesis activity and vascular permeability. Induces, through 'trans-signaling' and synergistically with IL1B and TNF, the production of VEGF. Involved in metabolic controls, is discharged into the bloodstream after muscle contraction increasing lipolysis and improving insulin resistance. 'Trans-signaling' in central nervous system also regulates energy and glucose homeostasis. Mediates, through GLP-1, crosstalk between insulin-sensitive tissues, intestinal L cells and pancreatic islets to adapt to changes in insulin demand. Also acts as a myokine. Plays a protective role during liver injury, being required for maintenance of tissue regeneration. Also has a pivotal role in iron metabolism by regulating HAMP/hepcidin expression upon inflammation or bacterial infection. Through activation of IL6ST-YAP-NOTCH pathway, induces inflammation-induced epithelial regeneration. The sequence is that of Interleukin-6 (IL6) from Phoca vitulina (Harbor seal).